The chain runs to 427 residues: L-cysteine:1D-myo-inositol 2-amino-2-deoxy-alpha-D-glucopyranoside ligase (427 aa).

Cys-46 contributes to the Zn(2+) binding site. L-cysteinyl-5'-AMP is bound by residues 46-49 (CGIT), Thr-61, and 84-86 (NVT). A 'HIGH' region motif is present at residues 48 to 58 (ITPYDATHMGH). The 'ERGGDP' region motif lies at 186–191 (ERGGDP). Residue Trp-233 coordinates L-cysteinyl-5'-AMP. Position 237 (Cys-237) interacts with Zn(2+). 255-257 (GSD) is a binding site for L-cysteinyl-5'-AMP. His-262 contributes to the Zn(2+) binding site. Val-289 is an L-cysteinyl-5'-AMP binding site. Positions 295–299 (KMSKS) match the 'KMSKS' region motif.

Belongs to the class-I aminoacyl-tRNA synthetase family. MshC subfamily. In terms of assembly, monomer. Zn(2+) is required as a cofactor.

It carries out the reaction 1D-myo-inositol 2-amino-2-deoxy-alpha-D-glucopyranoside + L-cysteine + ATP = 1D-myo-inositol 2-(L-cysteinylamino)-2-deoxy-alpha-D-glucopyranoside + AMP + diphosphate + H(+). Functionally, catalyzes the ATP-dependent condensation of GlcN-Ins and L-cysteine to form L-Cys-GlcN-Ins. The protein is L-cysteine:1D-myo-inositol 2-amino-2-deoxy-alpha-D-glucopyranoside ligase of Catenulispora acidiphila (strain DSM 44928 / JCM 14897 / NBRC 102108 / NRRL B-24433 / ID139908).